Here is a 132-residue protein sequence, read N- to C-terminus: Small ribosomal subunit protein uS8 (132 aa).

The protein belongs to the universal ribosomal protein uS8 family. As to quaternary structure, part of the 30S ribosomal subunit. Contacts proteins S5 and S12.

In terms of biological role, one of the primary rRNA binding proteins, it binds directly to 16S rRNA central domain where it helps coordinate assembly of the platform of the 30S subunit. The protein is Small ribosomal subunit protein uS8 of Halothermothrix orenii (strain H 168 / OCM 544 / DSM 9562).